The chain runs to 115 residues: Large ribosomal subunit protein bL19 (115 aa).

The protein belongs to the bacterial ribosomal protein bL19 family.

Functionally, this protein is located at the 30S-50S ribosomal subunit interface and may play a role in the structure and function of the aminoacyl-tRNA binding site. The protein is Large ribosomal subunit protein bL19 of Streptococcus gordonii (strain Challis / ATCC 35105 / BCRC 15272 / CH1 / DL1 / V288).